We begin with the raw amino-acid sequence, 674 residues long: Probable L-type lectin-domain containing receptor kinase II.1 (674 aa).

The first 24 residues, 1-24, serve as a signal peptide directing secretion; it reads MAGVLGSVVFWLIIGIHVTFLVFA. Residues 25 to 301 lie on the Extracellular side of the membrane; sequence QEGDHFVYYD…PSPKRFPLKE (277 aa). The tract at residues 28 to 274 is legume-lectin like; it reads DHFVYYDFRN…NQYILGWSFK (247 aa). Residues Asn-57, Asn-117, Asn-133, Asn-185, Asn-210, and Asn-242 are each glycosylated (N-linked (GlcNAc...) asparagine). The helical transmembrane segment at 302-322 threads the bilayer; that stretch reads VLGATISTIAFLTLGGIVYLY. At 323–674 the chain is on the cytoplasmic side; sequence KKKKYAEVLE…EDVTVLFGGR (352 aa). A Protein kinase domain is found at 355-633; that stretch reads FRENQLLGAG…LEGNVSVPAI (279 aa). ATP-binding positions include 361-369 and Lys-383; that span reads LGAGGFGKV. Asp-480 (proton acceptor) is an active-site residue.

In the C-terminal section; belongs to the protein kinase superfamily. Ser/Thr protein kinase family. The protein in the N-terminal section; belongs to the leguminous lectin family.

It localises to the cell membrane. The catalysed reaction is L-seryl-[protein] + ATP = O-phospho-L-seryl-[protein] + ADP + H(+). It catalyses the reaction L-threonyl-[protein] + ATP = O-phospho-L-threonyl-[protein] + ADP + H(+). This chain is Probable L-type lectin-domain containing receptor kinase II.1 (LECRK21), found in Arabidopsis thaliana (Mouse-ear cress).